Here is a 340-residue protein sequence, read N- to C-terminus: Uroporphyrinogen decarboxylase (340 aa).

Residues 21-25 (RQAGR), Phe40, Asp71, Tyr147, Ser202, and His316 each bind substrate.

The protein belongs to the uroporphyrinogen decarboxylase family. In terms of assembly, homodimer.

The protein localises to the cytoplasm. The catalysed reaction is uroporphyrinogen III + 4 H(+) = coproporphyrinogen III + 4 CO2. Its pathway is porphyrin-containing compound metabolism; protoporphyrin-IX biosynthesis; coproporphyrinogen-III from 5-aminolevulinate: step 4/4. Functionally, catalyzes the decarboxylation of four acetate groups of uroporphyrinogen-III to yield coproporphyrinogen-III. The chain is Uroporphyrinogen decarboxylase from Helicobacter hepaticus (strain ATCC 51449 / 3B1).